The primary structure comprises 902 residues: Desmocollin-2 (902 aa).

The signal sequence occupies residues 1–27 (MAAVGSMRSGSPAFGLGHLLTLAILAL). A propeptide spanning residues 28-135 (ASDACKEVVL…TEKVLSRAKR (108 aa)) is cleaved from the precursor. 5 consecutive Cadherin domains span residues 136–243 (RWAP…YPIF), 244–355 (TQKL…LPTF), 356–471 (TRTT…GPEC), 472–579 (IPPM…FIPK), and 580–694 (QTVV…RLGP). Topologically, residues 136-694 (RWAPIPCSML…TGYADVRLGP (559 aa)) are extracellular. A glycan (N-linked (GlcNAc...) asparagine) is linked at Asn166. 3 N-linked (GlcNAc...) asparagine glycosylation sites follow: Asn392, Asn546, and Asn629. A helical transmembrane segment spans residues 695-715 (WAILAILLGIALLFCILFTLV). Topologically, residues 716 to 902 (CSVSRASKQQ…RTLAEVCAKR (187 aa)) are cytoplasmic. Residues Ser865, Ser869, and Ser874 each carry the phosphoserine modification.

As to quaternary structure, interacts with DSP, PKP2 and JUP. Interacts with DSG3; the interaction may limit the interaction of DSC3 with p38MAPK family members and therefore repress p38MAPK signaling activation. In terms of tissue distribution, expressed in intestinal epithelial cells (at protein level). Expressed in the heart. Expressed in tongue, bladder, stomach, liver, kidney, and lung.

It localises to the cell membrane. The protein localises to the cell junction. Its subcellular location is the desmosome. A component of desmosome cell-cell junctions which are required for positive regulation of cellular adhesion. Promotes timely incorporation of DSG2 into desmosome intercellular junctions and promotes interaction of desmosome cell junctions with intermediate filament cytokeratin, via modulation of DSP phosphorylation. Plays an important role in desmosome-mediated maintenance of intestinal epithelial cell intercellular adhesion strength and barrier function. Positively regulates wound healing of intestinal mucosa via promotion of epithelial cell migration, and also plays a role in mechanotransduction of force between intestinal epithelial cells and extracellular matrix. May contribute to epidermal cell positioning (stratification) by mediating differential adhesiveness between cells that express different isoforms. May promote p38MAPK signaling activation that facilitates keratinocyte migration. The sequence is that of Desmocollin-2 (Dsc2) from Mus musculus (Mouse).